The sequence spans 487 residues: 3-octaprenyl-4-hydroxybenzoate carboxy-lyase (487 aa).

Asn-172 contacts Mn(2+). Prenylated FMN-binding positions include 175-177, 189-191, and 194-195; these read IYR, RWL, and RG. Residue Glu-238 participates in Mn(2+) binding. Residue Asp-287 is the Proton donor of the active site.

This sequence belongs to the UbiD family. In terms of assembly, homohexamer. Requires prenylated FMN as cofactor. Mn(2+) is required as a cofactor.

The protein localises to the cell membrane. It catalyses the reaction a 4-hydroxy-3-(all-trans-polyprenyl)benzoate + H(+) = a 2-(all-trans-polyprenyl)phenol + CO2. It participates in cofactor biosynthesis; ubiquinone biosynthesis. Functionally, catalyzes the decarboxylation of 3-octaprenyl-4-hydroxy benzoate to 2-octaprenylphenol, an intermediate step in ubiquinone biosynthesis. The polypeptide is 3-octaprenyl-4-hydroxybenzoate carboxy-lyase (Dechloromonas aromatica (strain RCB)).